The following is a 225-amino-acid chain: Ribonuclease 3 (225 aa).

The RNase III domain occupies 5–127; sequence IDKLERKIGY…IIGAVYLDSD (123 aa). Glu-40 provides a ligand contact to Mg(2+). Asp-44 is a catalytic residue. The Mg(2+) site is built by Asp-113 and Glu-116. Glu-116 is a catalytic residue. The DRBM domain occupies 154-224; it reads DPKTRLQEFL…AETALEQLSN (71 aa).

The protein belongs to the ribonuclease III family. In terms of assembly, homodimer. Requires Mg(2+) as cofactor.

It is found in the cytoplasm. The enzyme catalyses Endonucleolytic cleavage to 5'-phosphomonoester.. In terms of biological role, digests double-stranded RNA. Involved in the processing of primary rRNA transcript to yield the immediate precursors to the large and small rRNAs (23S and 16S). Processes some mRNAs, and tRNAs when they are encoded in the rRNA operon. Processes pre-crRNA and tracrRNA of type II CRISPR loci if present in the organism. The chain is Ribonuclease 3 from Vibrio atlanticus (strain LGP32) (Vibrio splendidus (strain Mel32)).